The chain runs to 326 residues: MLNKNIGYISPDYLYKYNSPINTEAILKIRQERQAKLFKFSHEKYYKAVQTIADIQSNFFDCSSAVIKVGHPEEISPGQKQRLYHCLQTFCPWKKGPFELFGVNIDAEWRSDWKWDRILPHISSIKNRKVADIGCHNGYFMFRMVDQQPELVIGFEPYSKHFWNFQLIQNIVKQKMLAFELLGVEHIHYYPQFFDTIFCLGILYHHTDPIGLLRKMRQALGPKGEVIIDCQGIPGDLPVALTPQKRYAQARGIWFLPTQSCLENWIGRAGFSDINCFFAAPLSVEEQRRTIWANIDSLPEFLDPHNPSLTVEGYPAPWRYYAIARK.

Carboxy-S-adenosyl-L-methionine is bound by residues Lys-95, Trp-109, Lys-114, Gly-134, 184 to 185 (VE), Tyr-204, and Arg-319.

This sequence belongs to the class I-like SAM-binding methyltransferase superfamily. CmoB family.

The catalysed reaction is carboxy-S-adenosyl-L-methionine + 5-hydroxyuridine(34) in tRNA = 5-carboxymethoxyuridine(34) in tRNA + S-adenosyl-L-homocysteine + H(+). Functionally, catalyzes carboxymethyl transfer from carboxy-S-adenosyl-L-methionine (Cx-SAM) to 5-hydroxyuridine (ho5U) to form 5-carboxymethoxyuridine (cmo5U) at position 34 in tRNAs. The protein is tRNA U34 carboxymethyltransferase of Trichodesmium erythraeum (strain IMS101).